We begin with the raw amino-acid sequence, 1067 residues long: Ubiquitin carboxyl-terminal hydrolase 26 (1067 aa).

Residues 1-12 are compositionally biased toward basic residues; the sequence is MSRPNTRNKNKR. The segment at 1–22 is disordered; it reads MSRPNTRNKNKRQRPDAVDSSS. The 337-residue stretch at 106–442 folds into the USP domain; the sequence is AGLTNLGATC…DAYMLMYSLR (337 aa). Cys-115 functions as the Nucleophile in the catalytic mechanism. The active-site Proton acceptor is the His-359. The interval 385 to 418 is disordered; it reads KRPCNEASSSTPQSESNGTASSGNITDGIQSGSS. Residues 390–418 show a composition bias toward polar residues; that stretch reads EASSSTPQSESNGTASSGNITDGIQSGSS. 3 DUSP domains span residues 503–595, 610–711, and 738–861; these read NALT…GDYC, DSYR…DCTC, and TLKV…SAFI. Residues 948–1031 enclose the Ubiquitin-like domain; the sequence is FEVDRRTSKR…LWVRDTEMHE (84 aa).

Belongs to the peptidase C19 family. Expressed in seedlings, roots, stems, leaves and inflorescences.

It localises to the nucleus. The catalysed reaction is Thiol-dependent hydrolysis of ester, thioester, amide, peptide and isopeptide bonds formed by the C-terminal Gly of ubiquitin (a 76-residue protein attached to proteins as an intracellular targeting signal).. Its function is as follows. Recognizes and hydrolyzes the peptide bond at the C-terminal Gly of ubiquitin. Involved in the processing of poly-ubiquitin precursors as well as that of ubiquitinated proteins. Deubiquitinates H2BK143ub1 of histone H2B. The polypeptide is Ubiquitin carboxyl-terminal hydrolase 26 (UBP26) (Arabidopsis thaliana (Mouse-ear cress)).